A 466-amino-acid polypeptide reads, in one-letter code: mRNA-capping enzyme subunit alpha (466 aa).

Catalysis depends on Lys67, which acts as the N6-GMP-lysine intermediate. The interval 408–466 (REQGLKNAQKQFNHQASARSSLSQQHSTEPEQSQDQPKYVDDDDDNWSDDEPDTKRQKI) is disordered. Residues 413 to 443 (KNAQKQFNHQASARSSLSQQHSTEPEQSQDQ) are compositionally biased toward polar residues. A compositionally biased stretch (acidic residues) spans 448–459 (DDDDDNWSDDEP).

This sequence belongs to the eukaryotic GTase family. Heterodimer. The mRNA-capping enzyme is composed of two separate chains alpha and beta, respectively a mRNA guanylyltransferase and an mRNA 5'-triphosphate monophosphatase.

Its subcellular location is the nucleus. It catalyses the reaction a 5'-end diphospho-ribonucleoside in mRNA + GTP + H(+) = a 5'-end (5'-triphosphoguanosine)-ribonucleoside in mRNA + diphosphate. Second step of mRNA capping. Transfer of the GMP moiety of GTP to the 5'-end of RNA via an enzyme-GMP covalent reaction intermediate. The polypeptide is mRNA-capping enzyme subunit alpha (CEG1) (Kluyveromyces lactis (strain ATCC 8585 / CBS 2359 / DSM 70799 / NBRC 1267 / NRRL Y-1140 / WM37) (Yeast)).